A 1269-amino-acid chain; its full sequence is Histone-lysine N-methyltransferase SETDB1 (1269 aa).

A coiled-coil region spans residues 9-63 (KELGISMDDLRELIDRELEKIEFVKQRKAQLLEMEQLVKQKEAEVDHVDKLFDNA). Disordered stretches follow at residues 85 to 121 (YKES…GEAV) and 153 to 188 (QKKS…DMSK). Positions 103–112 (EIPDEDDDDV) are enriched in acidic residues. Low complexity predominate over residues 164-177 (SSHPSSPTSSVGGS). Tudor domains are found at residues 250-312 (ENLT…RPWS) and 340-395 (VLLK…MFSM). Over residues 396 to 414 (KTSNASTQEKQQAGQQRTR) the composition is skewed to polar residues. The interval 396-516 (KTSNASTQEK…FQSNQSVQPV (121 aa)) is disordered. Over residues 462–476 (DSQQAQSKKQVAKKS) the composition is skewed to low complexity. Positions 486 to 497 (SGQSSPIPTESV) are enriched in polar residues. Residues 620-691 (HRGKNPLLVP…EMFCLDPYVL (72 aa)) enclose the MBD domain. Residues 753 to 826 (VGCDCTDGCR…MCNNRLVQHG (74 aa)) enclose the Pre-SET domain. Residues Cys-755, Cys-757, Cys-761, Cys-767, Cys-769, Cys-807, Cys-811, Cys-813, and Cys-818 each contribute to the Zn(2+) site. The SET domain occupies 829–1244 (VRLQLFKTQN…AGTELTWDYN (416 aa)). S-adenosyl-L-methionine is bound by residues 839–841 (KGW), Asp-877, and Tyr-879. A disordered region spans residues 894–1139 (EGYESDAKSS…VAASAGPVKR (246 aa)). Residues 919–932 (SGSEDQEESNDSSD) show a composition bias toward acidic residues. 2 stretches are compositionally biased toward basic and acidic residues: residues 968–989 (ASKD…ETSK) and 1021–1033 (ETDK…EASK). The span at 1078-1094 (TEEVLTLSSSSDSEVGS) shows a compositional bias: low complexity. Polar residues predominate over residues 1106-1120 (ATANDSDDIQTISSG). Residues Arg-1198 and 1201 to 1202 (NH) each bind S-adenosyl-L-methionine. Zn(2+)-binding residues include Cys-1204, Cys-1257, Cys-1259, and Cys-1264. Residues 1253–1269 (KKLLCCCGSTECRGRLL) enclose the Post-SET domain.

The protein belongs to the class V-like SAM-binding methyltransferase superfamily. Histone-lysine methyltransferase family. Suvar3-9 subfamily.

The protein resides in the nucleus. Its subcellular location is the chromosome. It catalyses the reaction N(6),N(6)-dimethyl-L-lysyl(9)-[histone H3] + S-adenosyl-L-methionine = N(6),N(6),N(6)-trimethyl-L-lysyl(9)-[histone H3] + S-adenosyl-L-homocysteine + H(+). Its function is as follows. Histone methyltransferase that specifically trimethylates 'Lys-9' of histone H3. H3 'Lys-9' trimethylation represents a specific tag for epigenetic transcriptional repression by recruiting HP1 (CBX1, CBX3 and/or CBX5) proteins to methylated histones. Mainly functions in euchromatin regions, thereby playing a central role in the silencing of euchromatic genes. H3 'Lys-9' trimethylation is coordinated with DNA methylation. Plays a role in promoter hypermethylation and transcriptional silencing of tumor suppressor genes (TSGs) or other tumor-related genes. Also required to maintain a transcriptionally repressive state of genes in undifferentiated embryonic stem cells (ESCs). Associates at promoter regions of tumor suppressor genes (TSGs) leading to their gene silencing. This Xenopus laevis (African clawed frog) protein is Histone-lysine N-methyltransferase SETDB1 (setdb1).